The primary structure comprises 704 residues: Elongation factor G 1 (704 aa).

Positions 8-285 (EKIRNIGISA…AVCAFLPNPK (278 aa)) constitute a tr-type G domain. GTP contacts are provided by residues 17–24 (AHIDSGKT), 84–88 (DTPGH), and 138–141 (NKMD).

It belongs to the TRAFAC class translation factor GTPase superfamily. Classic translation factor GTPase family. EF-G/EF-2 subfamily.

The protein localises to the cytoplasm. Catalyzes the GTP-dependent ribosomal translocation step during translation elongation. During this step, the ribosome changes from the pre-translocational (PRE) to the post-translocational (POST) state as the newly formed A-site-bound peptidyl-tRNA and P-site-bound deacylated tRNA move to the P and E sites, respectively. Catalyzes the coordinated movement of the two tRNA molecules, the mRNA and conformational changes in the ribosome. The chain is Elongation factor G 1 from Myxococcus xanthus (strain DK1622).